We begin with the raw amino-acid sequence, 117 residues long: MDFQFTHYQGNVSVKCSMEHIALANWFNTEVRSNSDKILTALSTAKSLIENQEKVLIGTEYTLFLNADEVMVRANNLAIESDEILEQDFHYYDEESLAFCGTQDFIHFLQSYVDFIA.

The protein belongs to the UPF0231 family.

The polypeptide is UPF0231 protein HI_1724 (Haemophilus influenzae (strain ATCC 51907 / DSM 11121 / KW20 / Rd)).